The following is a 326-amino-acid chain: N-acetyl-gamma-glutamyl-phosphate reductase (326 aa).

The active site involves Cys155.

Belongs to the NAGSA dehydrogenase family. Type 1 subfamily.

The protein resides in the cytoplasm. It carries out the reaction N-acetyl-L-glutamate 5-semialdehyde + phosphate + NADP(+) = N-acetyl-L-glutamyl 5-phosphate + NADPH + H(+). Its pathway is amino-acid biosynthesis; L-arginine biosynthesis; N(2)-acetyl-L-ornithine from L-glutamate: step 3/4. Functionally, catalyzes the NADPH-dependent reduction of N-acetyl-5-glutamyl phosphate to yield N-acetyl-L-glutamate 5-semialdehyde. This is N-acetyl-gamma-glutamyl-phosphate reductase from Shewanella oneidensis (strain ATCC 700550 / JCM 31522 / CIP 106686 / LMG 19005 / NCIMB 14063 / MR-1).